The following is a 300-amino-acid chain: MTLNQRDQFFSHCHGHPQKPMEIYMFVDPLSPECWALEPAIKKLKIRYGRFFTLRIIAACSITALNVQKRKKRRLAEAWEKIACRSGMSCDGTLLHDKALSAPYLASLALKAAELQGRKAGLQFLRCMQESLFLNQQDITEEQVLLAIAEHTQLDLEEFKRDLHSQSAVKALQCDLKIAAEMEVASVPTLTFFNSLREGEGLKVTGNYSYEIYEEVLFEMLGDEPKPSQTPPLELFIEYFQFVADKEIAVVYDWTLEQVEREMKKLAFARKVERVEAKHGMFWRYINEHHDAGPLYQCEK.

It belongs to the SpxH family. As to quaternary structure, interacts with Spx.

It is found in the cytoplasm. Its function is as follows. Adapter protein required for efficient degradation of Spx by ClpXP under non-stress conditions. Interaction with Spx stabilizes Spx and exposes the C-terminus of Spx for recognition and proteolysis by ClpXP. The protein is ClpXP adapter protein SpxH of Bacillus licheniformis (strain ATCC 14580 / DSM 13 / JCM 2505 / CCUG 7422 / NBRC 12200 / NCIMB 9375 / NCTC 10341 / NRRL NRS-1264 / Gibson 46).